A 1481-amino-acid polypeptide reads, in one-letter code: Cystic fibrosis transmembrane conductance regulator (1481 aa).

The Cytoplasmic segment spans residues 1 to 77 (MQRSPLEKAS…KLINALRRCF (77 aa)). Residues 78-98 (FWRFMFYGILLYLGEVTKAVQ) traverse the membrane as a helical segment. The ABC transmembrane type-1 1 domain occupies 81–365 (FMFYGILLYL…WAVQTWYDSL (285 aa)). Topologically, residues 99 to 122 (PLLLGRIIASYDPDNKEERSIAIY) are extracellular. The helical transmembrane segment at 123–146 (LGIGLCLLFIVRTLLLHPAIFGLH) threads the bilayer. Topologically, residues 147–195 (HIGMQMRIAMFSLIYKKTLKLSSRVLDKISIGQLVSLLSNNLNKFDEGL) are cytoplasmic. Residues 196–216 (ALAHFVWIVPLQVALLMGLIW) form a helical membrane-spanning segment. Residues 217-222 (ELLQAS) are Extracellular-facing. A helical transmembrane segment spans residues 223–243 (AFCGLGFLIVLALFQAGLGRM). Topologically, residues 244-298 (MMKYRDQRAGKINERLVITSEMIENIQSVKAYCWEEAMEKMIENLRQTELKLTRK) are cytoplasmic. Residues 299–319 (AAYVRYFNSSAFFFSGFFVVF) traverse the membrane as a helical segment. Residues 320–339 (LSVLPYALIKGIVLRKIFTT) lie on the Extracellular side of the membrane. The helical transmembrane segment at 340–358 (ISFCIVLRMAVTRQFPWAV) threads the bilayer. Over 359 to 858 (QTWYDSLGAI…YLRYITVHKS (500 aa)) the chain is Cytoplasmic. Residues Trp401, Ser434, 458-465 (GSTGAGKT), and Gln493 each bind ATP. The ABC transporter 1 domain occupies 423–646 (NDDDSLFFSN…RPDFSSKLMG (224 aa)). A lipid anchor (S-palmitoyl cysteine) is attached at Cys524. Ser549 and Ser660 each carry phosphoserine. Residues 654-831 (SAERRNSILT…EEINEEDLKE (178 aa)) are disordered R region. The residue at position 670 (Ser670) is a Phosphoserine; by PKA. A Phosphoserine modification is found at Ser686. Lys688 is covalently cross-linked (Glycyl lysine isopeptide (Lys-Gly) (interchain with G-Cter in ubiquitin)). A phosphoserine mark is found at Ser700 and Ser712. A Phosphothreonine modification is found at Thr717. Phosphoserine occurs at positions 737, 753, 768, 790, 795, and 813. The chain crosses the membrane as a helical span at residues 859-879 (LIFVLIWCLVIFLAEVAASLV). Residues 859–1155 (LIFVLIWCLV…AVNSSIDVDS (297 aa)) enclose the ABC transmembrane type-1 2 domain. Over 880-918 (VLWFLGNTPPQDKGNSTYSRNNSYAVIITRTSSYYVFYI) the chain is Extracellular. N-linked (GlcNAc...) asparagine glycosylation is found at Asn894 and Asn900. Residues 919 to 939 (YVGVADTLLAMGFFRGLPLVH) traverse the membrane as a discontinuously helical segment. The Cytoplasmic portion of the chain corresponds to 940-990 (TLITVSKILHHKMLHSVLQAPMSTLNTLKAGGILNRFSKDIAILDDLLPLT). Residues 991–1011 (IFDFIQLLLIVIGAIAVVAVL) traverse the membrane as a helical segment. Residues 1012–1013 (QP) lie on the Extracellular side of the membrane. The chain crosses the membrane as a helical span at residues 1014 to 1034 (YIFVATVPVIVAFIMLRAYFL). At 1035–1095 (QTSQQLKQLE…TANWFLYLST (61 aa)) the chain is on the cytoplasmic side. Residues 1096–1116 (LRWFQMRIEMIFVIFFIAVTF) form a helical membrane-spanning segment. Residues 1117 to 1130 (ISILTTGEGEGTVG) are Extracellular-facing. The chain crosses the membrane as a helical span at residues 1131 to 1151 (IILTLAMNIMSTLQWAVNSSI). Residues 1152–1481 (DVDSLMRSVS…TEEEVQDTRL (330 aa)) lie on the Cytoplasmic side of the membrane. The region spanning 1211–1444 (MTVKDLTAKY…RSLFRQAISP (234 aa)) is the ABC transporter 2 domain. Residues Tyr1220 and 1245 to 1252 (GRTGSGKS) contribute to the ATP site. The segment at 1387–1481 (RTLKQAFADC…TEEEVQDTRL (95 aa)) is interaction with GORASP2. Cys1396 carries S-palmitoyl cysteine lipidation. Phosphoserine occurs at positions 1445 and 1457. The PDZ-binding motif lies at 1479–1481 (TRL).

Belongs to the ABC transporter superfamily. ABCC family. CFTR transporter (TC 3.A.1.202) subfamily. In terms of assembly, monomer; does not require oligomerization for channel activity. May form oligomers in the membrane. Interacts with SLC26A3, SLC26A6 and NHERF1. Interacts with SHANK2. Interacts with MYO6. Interacts (via C-terminus) with GOPC (via PDZ domain); this promotes CFTR internalization and thereby decreases channel activity. Interacts with SLC4A7 through NHERF1. Found in a complex with MYO5B and RAB11A. Interacts with ANO1. Interacts with SLC26A8. Interacts with AHCYL1; the interaction increases CFTR activity. Interacts with CSE1L. The core-glycosylated form interacts with GORASP2 (via PDZ GRASP-type 1 domain) in respone to ER stress. Interacts with MARCHF2; the interaction leads to CFTR ubiqtuitination and degradation. Interacts with ADGRG2. Post-translationally, N-glycosylated. Phosphorylated; cAMP treatment promotes phosphorylation and activates the channel. Dephosphorylation decreases the ATPase activity (in vitro). Phosphorylation at PKA sites activates the channel. Phosphorylation at PKC sites enhances the response to phosphorylation by PKA. Phosphorylated by AMPK; this inhibits channel activity. In terms of processing, ubiquitinated, leading to its degradation in the lysosome. Deubiquitination by USP10 in early endosomes enhances its endocytic recycling to the cell membrane. Ubiquitinated by RNF185 during ER stress. Ubiquitinated by MARCHF2.

It localises to the apical cell membrane. The protein resides in the early endosome membrane. The protein localises to the cell membrane. It is found in the recycling endosome membrane. Its subcellular location is the endoplasmic reticulum membrane. It localises to the nucleus. It catalyses the reaction ATP + H2O + closed Cl(-) channel = ADP + phosphate + open Cl(-) channel.. The enzyme catalyses chloride(in) = chloride(out). It carries out the reaction hydrogencarbonate(in) = hydrogencarbonate(out). The catalysed reaction is ATP + H2O = ADP + phosphate + H(+). Its function is as follows. Epithelial ion channel that plays an important role in the regulation of epithelial ion and water transport and fluid homeostasis. Mediates the transport of chloride ions across the cell membrane. Possesses an intrinsic ATPase activity and utilizes ATP to gate its channel; the passive flow of anions through the channel is gated by cycles of ATP binding and hydrolysis by the ATP-binding domains. The ion channel is also permeable to HCO(3)(-); selectivity depends on the extracellular chloride concentration. Exerts its function also by modulating the activity of other ion channels and transporters. Contributes to the regulation of the pH and the ion content of the epithelial fluid layer. Modulates the activity of the epithelial sodium channel (ENaC) complex, in part by regulating the cell surface expression of the ENaC complex. May regulate bicarbonate secretion and salvage in epithelial cells by regulating the transporter SLC4A7. Can inhibit the chloride channel activity of ANO1. Plays a role in the chloride and bicarbonate homeostasis during sperm epididymal maturation and capacitation. The polypeptide is Cystic fibrosis transmembrane conductance regulator (Macaca fascicularis (Crab-eating macaque)).